The sequence spans 201 residues: NADH-quinone oxidoreductase subunit C 1 (201 aa).

The protein belongs to the complex I 30 kDa subunit family. As to quaternary structure, NDH-1 is composed of 14 different subunits. Subunits NuoB, C, D, E, F, and G constitute the peripheral sector of the complex.

Its subcellular location is the cell inner membrane. The enzyme catalyses a quinone + NADH + 5 H(+)(in) = a quinol + NAD(+) + 4 H(+)(out). Functionally, NDH-1 shuttles electrons from NADH, via FMN and iron-sulfur (Fe-S) centers, to quinones in the respiratory chain. The immediate electron acceptor for the enzyme in this species is believed to be ubiquinone. Couples the redox reaction to proton translocation (for every two electrons transferred, four hydrogen ions are translocated across the cytoplasmic membrane), and thus conserves the redox energy in a proton gradient. The chain is NADH-quinone oxidoreductase subunit C 1 from Rhizobium meliloti (strain 1021) (Ensifer meliloti).